A 514-amino-acid polypeptide reads, in one-letter code: Probable type III restriction-modification enzyme HindVIP Res subunit (514 aa).

This sequence belongs to the type III restriction-modification system Res protein family. In terms of assembly, contains two different subunits: Res and Mod. Mg(2+) serves as cofactor. The cofactor is S-adenosyl-L-methionine.

It catalyses the reaction Endonucleolytic cleavage of DNA to give specific double-stranded fragments with terminal 5'-phosphates.. A type III restriction enzyme that recognizes 2 inversely oriented double-stranded sequences 5'-CGAAT-3' and cleaves 25-27 base pairs downstream. After binding to one recognition site undergoes random one-dimensional diffusion along DNA until it collides with a stationary enzyme bound to the second DNA site, which is when DNA cleavage occurs. DNA restriction requires both the Res and Mod subunits. This chain is Probable type III restriction-modification enzyme HindVIP Res subunit, found in Haemophilus influenzae (strain ATCC 51907 / DSM 11121 / KW20 / Rd).